We begin with the raw amino-acid sequence, 493 residues long: Cysteine--tRNA ligase (493 aa).

C29 contacts Zn(2+). The short motif at 31–41 (PTVYDFAHIGN) is the 'HIGH' region element. Positions 227, 252, and 256 each coordinate Zn(2+). The 'KMSKS' region signature appears at 285–289 (KMSKS). K288 serves as a coordination point for ATP.

Belongs to the class-I aminoacyl-tRNA synthetase family. Monomer. The cofactor is Zn(2+).

It is found in the cytoplasm. It catalyses the reaction tRNA(Cys) + L-cysteine + ATP = L-cysteinyl-tRNA(Cys) + AMP + diphosphate. The sequence is that of Cysteine--tRNA ligase from Rhodopseudomonas palustris (strain HaA2).